Consider the following 461-residue polypeptide: Kynureninase (461 aa).

Residues Leu-114, Thr-115, Phe-142–Asp-145, Asp-228, His-231, and Tyr-253 contribute to the pyridoxal 5'-phosphate site. Lys-254 is modified (N6-(pyridoxal phosphate)lysine). Pyridoxal 5'-phosphate is bound by residues Trp-288 and Asn-316.

The protein belongs to the kynureninase family. As to quaternary structure, homodimer. Requires pyridoxal 5'-phosphate as cofactor.

It is found in the cytoplasm. It carries out the reaction L-kynurenine + H2O = anthranilate + L-alanine + H(+). The enzyme catalyses 3-hydroxy-L-kynurenine + H2O = 3-hydroxyanthranilate + L-alanine + H(+). Its pathway is amino-acid degradation; L-kynurenine degradation; L-alanine and anthranilate from L-kynurenine: step 1/1. It participates in cofactor biosynthesis; NAD(+) biosynthesis; quinolinate from L-kynurenine: step 2/3. Functionally, catalyzes the cleavage of L-kynurenine (L-Kyn) and L-3-hydroxykynurenine (L-3OHKyn) into anthranilic acid (AA) and 3-hydroxyanthranilic acid (3-OHAA), respectively. The polypeptide is Kynureninase (Candida albicans (strain SC5314 / ATCC MYA-2876) (Yeast)).